We begin with the raw amino-acid sequence, 101 residues long: Small ribosomal subunit protein uS14A (101 aa).

The interval Thr-35–Ser-56 is disordered.

It belongs to the universal ribosomal protein uS14 family. As to quaternary structure, part of the 30S ribosomal subunit. Contacts proteins S3 and S10.

Binds 16S rRNA, required for the assembly of 30S particles and may also be responsible for determining the conformation of the 16S rRNA at the A site. The chain is Small ribosomal subunit protein uS14A from Mycobacterium marinum (strain ATCC BAA-535 / M).